The chain runs to 780 residues: Cullin-1 (780 aa).

Positions 710 to 771 constitute a Cullin neddylation domain; sequence DRKSVISACI…EKEYMLRTEG (62 aa). K724 participates in a covalent cross-link: Glycyl lysine isopeptide (Lys-Gly) (interchain with G-Cter in NEDD8).

Belongs to the cullin family. As to quaternary structure, component of an SCF (SKP1-CUL1-F-box protein) E3 ubiquitin ligase complex composed of cul-1, fsn-1, rpm-1 and skr-1. Interacts with Skp1-related proteins skr-1, skr-2, skr-3, skr-4, skr-7, skr-8, skr-9 and skr-10. Neddylated; which enhances the ubiquitination activity of SCF. In terms of tissue distribution, ubiquitous.

The protein localises to the cytoplasm. The protein operates within protein modification; protein ubiquitination. In terms of biological role, probable core component of multiple cullin-RING-based SCF (SKP1-CUL1-F-box) E3 ubiquitin-protein ligase complexes which mediate the ubiquitination and subsequent proteasomal degradation of target proteins. As a scaffold protein may contribute to catalysis through positioning of the substrate and the ubiquitin-conjugating enzyme. Required for developmentally programmed transitions from the G1 phase of the cell cycle to the G0 phase or the apoptotic pathway. The polypeptide is Cullin-1 (cul-1) (Caenorhabditis elegans).